We begin with the raw amino-acid sequence, 436 residues long: GTPase Der (436 aa).

2 consecutive EngA-type G domains span residues 4–167 (PVIA…PTDL) and 175–351 (IKFS…ENQN). Residues 10-17 (GRPNVGKS), 57-61 (DTGGI), 119-122 (NKAD), 181-188 (GRPNVGKS), 229-233 (DTAGI), and 294-297 (NKWD) contribute to the GTP site. Residues 352-436 (RRIQSALLND…PIHLIPRQRK (85 aa)) form the KH-like domain.

This sequence belongs to the TRAFAC class TrmE-Era-EngA-EngB-Septin-like GTPase superfamily. EngA (Der) GTPase family. In terms of assembly, associates with the 50S ribosomal subunit.

In terms of biological role, GTPase that plays an essential role in the late steps of ribosome biogenesis. The chain is GTPase Der from Latilactobacillus sakei subsp. sakei (strain 23K) (Lactobacillus sakei subsp. sakei).